The primary structure comprises 243 residues: Protein-L-isoaspartate O-methyltransferase (243 aa).

Residue Ser87 is part of the active site.

Belongs to the methyltransferase superfamily. L-isoaspartyl/D-aspartyl protein methyltransferase family.

The protein resides in the cytoplasm. The catalysed reaction is [protein]-L-isoaspartate + S-adenosyl-L-methionine = [protein]-L-isoaspartate alpha-methyl ester + S-adenosyl-L-homocysteine. Its function is as follows. Catalyzes the methyl esterification of L-isoaspartyl residues in peptides and proteins that result from spontaneous decomposition of normal L-aspartyl and L-asparaginyl residues. It plays a role in the repair and/or degradation of damaged proteins. The sequence is that of Protein-L-isoaspartate O-methyltransferase from Methanosarcina mazei (strain ATCC BAA-159 / DSM 3647 / Goe1 / Go1 / JCM 11833 / OCM 88) (Methanosarcina frisia).